We begin with the raw amino-acid sequence, 313 residues long: Ribosomal RNA small subunit methyltransferase H (313 aa).

Residues 35 to 37 (GGH), Asp-55, Phe-79, Asp-101, and Gln-108 each bind S-adenosyl-L-methionine.

The protein belongs to the methyltransferase superfamily. RsmH family.

It is found in the cytoplasm. It carries out the reaction cytidine(1402) in 16S rRNA + S-adenosyl-L-methionine = N(4)-methylcytidine(1402) in 16S rRNA + S-adenosyl-L-homocysteine + H(+). In terms of biological role, specifically methylates the N4 position of cytidine in position 1402 (C1402) of 16S rRNA. In Shigella sonnei (strain Ss046), this protein is Ribosomal RNA small subunit methyltransferase H.